Here is a 243-residue protein sequence, read N- to C-terminus: MQFQLFSFALIILNCVDYSHCQASRWRRSKRASYGTNPICKGCLSCSKDNGCLRCQPKLFFFLRREGMRQYGECLQSCPPGYYGVRGPDMNRCSRCRIENCDSCFSRDFCIKCKSGFYSLKGQCFEECPEGFAPLDDTMVCVDGCEVGPWSEWGTCSRNNRTCGFKWGLETRTRQIVKKPAKDTIPCPTIAESRRCKMAIRHCPGGKRTTKKKDKRNKKKKKKLLERAQEQHSVVLATDRSSQ.

A signal peptide spans 1-21; that stretch reads MQFQLFSFALIILNCVDYSHC. Disulfide bonds link cysteine 40-cysteine 46, cysteine 43-cysteine 52, cysteine 55-cysteine 74, cysteine 78-cysteine 93, cysteine 96-cysteine 104, cysteine 101-cysteine 110, cysteine 113-cysteine 124, cysteine 128-cysteine 141, cysteine 145-cysteine 187, cysteine 156-cysteine 163, and cysteine 196-cysteine 203. An FU repeat occupies 90–134; the sequence is MNRCSRCRIENCDSCFSRDFCIKCKSGFYSLKGQCFEECPEGFAP. In terms of domain architecture, TSP type-1 spans 144 to 204; sequence GCEVGPWSEW…RCKMAIRHCP (61 aa). An N-linked (GlcNAc...) asparagine glycan is attached at asparagine 160. Basic residues predominate over residues 204–224; sequence PGGKRTTKKKDKRNKKKKKKL. A disordered region spans residues 204-243; that stretch reads PGGKRTTKKKDKRNKKKKKKLLERAQEQHSVVLATDRSSQ.

The protein belongs to the R-spondin family. As to quaternary structure, binds heparin.

It is found in the secreted. Activator of the canonical Wnt signaling pathway by acting as a ligand for lgr4-6 receptors. Upon binding to lgr4-6 (lgr4, lgr5 or lgr6), lgr4-6 associate with phosphorylated lrp6 and frizzled receptors that are activated by extracellular Wnt receptors, triggering the canonical Wnt signaling pathway to increase expression of target genes. Acts both in the canonical Wnt/beta-catenin-dependent pathway and in non-canonical Wnt signaling pathway. Activates neural markers and promotes muscle formation. Overexpression blocks activin, nodal and BMP4 signaling, suggesting that it may negatively regulate the TGF-beta pathway. During embryonic development, plays a crucial role in limb specification, amplifying the Wnt signaling pathway independently of LGR4-6 receptors, possibly by acting as a direct antagonistic ligand to RNF43 and ZNRF3, hence governing the number of limbs an embryo should form. This chain is R-spondin-2 (rspo2), found in Xenopus laevis (African clawed frog).